We begin with the raw amino-acid sequence, 266 residues long: Tryptophan synthase alpha chain (266 aa).

Active-site proton acceptor residues include glutamate 51 and aspartate 62.

Belongs to the TrpA family. Tetramer of two alpha and two beta chains.

The catalysed reaction is (1S,2R)-1-C-(indol-3-yl)glycerol 3-phosphate + L-serine = D-glyceraldehyde 3-phosphate + L-tryptophan + H2O. It participates in amino-acid biosynthesis; L-tryptophan biosynthesis; L-tryptophan from chorismate: step 5/5. Its function is as follows. The alpha subunit is responsible for the aldol cleavage of indoleglycerol phosphate to indole and glyceraldehyde 3-phosphate. In Prochlorococcus marinus (strain NATL1A), this protein is Tryptophan synthase alpha chain.